The primary structure comprises 369 residues: MLKSKVHFWTLQILFVLLIIFVATKVSFVFQPFIVFISTLFFPMLIAGILYFIFNPVVRLLEKKIPRTLSILLIYLLFIGLLAFISASVGPIITAQVTGLFNNLPDYIKQIQALTKDLSHSQWFTWMMNQDYVSISKIEQSLTSFLQNLPQNITSSLSAVFGVVTNITLVIITVPFILFYMLKDGHRFPHLAVKILPASYRTEGLKIFKDLSDTLAAYFQGQLLICLFVGTACFIGYLIAGLPYALILGIVMAITNIIPYVGPFLGAAPAVIVGFMDSPAKALFAIIVVVIVQQLDGNLLSPLVIGKRLNTHPLTIILLLIGAGSFGGILGMILAVPVYAVVKAFFLNIVRLIKLRQRSRLEENAKPAE.

8 helical membrane passes run I13–F33, I34–F54, L73–I93, A159–F179, D213–C233, F234–I254, V271–I291, and I316–V336.

The protein belongs to the autoinducer-2 exporter (AI-2E) (TC 2.A.86) family.

Its subcellular location is the cell membrane. The sequence is that of Putative transport protein YueF (yueF) from Bacillus subtilis (strain 168).